Reading from the N-terminus, the 144-residue chain is MQLNNLKPAAGSKHAKRRVGRGIGSGLGKTAGRGHKGQKSRSGGFHKVGFEGGQMPLYRRLPKRGFTSLTKAFTAEVSLRDIERLEAAEVDLLVLKQAGLVSDLVKSAKVIKAGELTRKVTIKGLGATAGAKAAIEAAGGQIAE.

The interval 1 to 48 is disordered; sequence MQLNNLKPAAGSKHAKRRVGRGIGSGLGKTAGRGHKGQKSRSGGFHKV. The span at 21 to 31 shows a compositional bias: gly residues; sequence RGIGSGLGKTA.

It belongs to the universal ribosomal protein uL15 family. Part of the 50S ribosomal subunit.

Its function is as follows. Binds to the 23S rRNA. This is Large ribosomal subunit protein uL15 from Cupriavidus pinatubonensis (strain JMP 134 / LMG 1197) (Cupriavidus necator (strain JMP 134)).